The sequence spans 290 residues: MRIADYSVTKAVLERHGFTFKKSFGQNFLTDTNILQKIVDTAEIDDQVNVIEIGPGIGALTEFLAERAAQVMTFEIDHRLVPILADTLRDFDNVTVVNEDILKVDLAQHIQNFKNPDLPIKVVANLPYYITTPILMHLIESGIPFSEFVVMMQKEVADRISAQPNTKAYGSLSIAVQYYMTAKVAFIVPRTVFVPAPNVDSAILKMVRRPEPAVAVEDENFFFKVSKASFTHRRKTLWNNLTGYFGKTEEVKDKLTKALDQAGLSPSVRGEALSLAEFAGLADALKGQGL.

The S-adenosyl-L-methionine site is built by Asn-27, Leu-29, Gly-54, Glu-75, Asp-100, and Asn-125.

The protein belongs to the class I-like SAM-binding methyltransferase superfamily. rRNA adenine N(6)-methyltransferase family. RsmA subfamily.

It localises to the cytoplasm. It catalyses the reaction adenosine(1518)/adenosine(1519) in 16S rRNA + 4 S-adenosyl-L-methionine = N(6)-dimethyladenosine(1518)/N(6)-dimethyladenosine(1519) in 16S rRNA + 4 S-adenosyl-L-homocysteine + 4 H(+). In terms of biological role, specifically dimethylates two adjacent adenosines (A1518 and A1519) in the loop of a conserved hairpin near the 3'-end of 16S rRNA in the 30S particle. May play a critical role in biogenesis of 30S subunits. This Streptococcus pneumoniae (strain CGSP14) protein is Ribosomal RNA small subunit methyltransferase A.